A 368-amino-acid chain; its full sequence is Glycolate oxidase 3 (368 aa).

Residue Met1 is modified to N-acetylmethionine. The region spanning 1–359 is the FMN hydroxy acid dehydrogenase domain; that stretch reads MEITNVMEYE…SRTHIKTDWD (359 aa). Residue Tyr24 participates in glyoxylate binding. FMN contacts are provided by residues 77–79, Ser106, 127–129, and Thr155; these read PTA and QLY. Residue Tyr129 coordinates glyoxylate. Arg164 is a binding site for glyoxylate. The FMN site is built by Lys230 and Ser252. The glyoxylate site is built by His254 and Arg257. Catalysis depends on His254, which acts as the Proton acceptor. Residues 285–289 and 308–309 contribute to the FMN site; these read DGGVR and GR.

It belongs to the FMN-dependent alpha-hydroxy acid dehydrogenase family. In terms of assembly, homotetramer. The cofactor is FMN.

It is found in the peroxisome. The enzyme catalyses glycolate + O2 = glyoxylate + H2O2. The protein operates within photosynthesis; photorespiration; glycine from 2-phosphoglycolate: step 2/3. Catalyzes the oxidation of glycolate to glyoxylate, with a reduction of O2 to H2O2. Is a key enzyme in photorespiration in green plants. The chain is Glycolate oxidase 3 (GLO5) from Arabidopsis thaliana (Mouse-ear cress).